The chain runs to 636 residues: DNA mismatch repair protein MutL (636 aa).

Over residues 332–344 the composition is skewed to basic and acidic residues; sequence HAGEQGDSLRTDI. Disordered stretches follow at residues 332 to 360 and 417 to 443; these read HAGE…PADN and ASAP…SDDA. The span at 417–437 shows a compositional bias: low complexity; the sequence is ASAPADAAPAQASEPAAAPQA.

This sequence belongs to the DNA mismatch repair MutL/HexB family.

In terms of biological role, this protein is involved in the repair of mismatches in DNA. It is required for dam-dependent methyl-directed DNA mismatch repair. May act as a 'molecular matchmaker', a protein that promotes the formation of a stable complex between two or more DNA-binding proteins in an ATP-dependent manner without itself being part of a final effector complex. This is DNA mismatch repair protein MutL from Ralstonia nicotianae (strain ATCC BAA-1114 / GMI1000) (Ralstonia solanacearum).